The primary structure comprises 449 residues: Bifunctional protein GlmU (449 aa).

Residues 1–229 (MNHFAVILAA…FEETIGVNDR (229 aa)) are pyrophosphorylase. UDP-N-acetyl-alpha-D-glucosamine contacts are provided by residues 8-11 (LAAG), Lys22, Gln72, and 77-78 (GT). Asp102 contacts Mg(2+). 4 residues coordinate UDP-N-acetyl-alpha-D-glucosamine: Gly139, Glu154, Asn169, and Asn227. Asn227 contacts Mg(2+). A linker region spans residues 230 to 250 (VALAQAETSMRKRTNEHWMRQ). Residues 251-449 (GVTFIDPAST…ERQTTKPDYR (199 aa)) form an N-acetyltransferase region. Arg332 and Lys350 together coordinate UDP-N-acetyl-alpha-D-glucosamine. His362 functions as the Proton acceptor in the catalytic mechanism. 2 residues coordinate UDP-N-acetyl-alpha-D-glucosamine: Tyr365 and Asn376. Acetyl-CoA-binding positions include 385–386 (NY), Ala422, and Arg439.

This sequence in the N-terminal section; belongs to the N-acetylglucosamine-1-phosphate uridyltransferase family. The protein in the C-terminal section; belongs to the transferase hexapeptide repeat family. Homotrimer. Mg(2+) is required as a cofactor.

The protein localises to the cytoplasm. It carries out the reaction alpha-D-glucosamine 1-phosphate + acetyl-CoA = N-acetyl-alpha-D-glucosamine 1-phosphate + CoA + H(+). The catalysed reaction is N-acetyl-alpha-D-glucosamine 1-phosphate + UTP + H(+) = UDP-N-acetyl-alpha-D-glucosamine + diphosphate. It functions in the pathway nucleotide-sugar biosynthesis; UDP-N-acetyl-alpha-D-glucosamine biosynthesis; N-acetyl-alpha-D-glucosamine 1-phosphate from alpha-D-glucosamine 6-phosphate (route II): step 2/2. Its pathway is nucleotide-sugar biosynthesis; UDP-N-acetyl-alpha-D-glucosamine biosynthesis; UDP-N-acetyl-alpha-D-glucosamine from N-acetyl-alpha-D-glucosamine 1-phosphate: step 1/1. The protein operates within bacterial outer membrane biogenesis; LPS lipid A biosynthesis. Functionally, catalyzes the last two sequential reactions in the de novo biosynthetic pathway for UDP-N-acetylglucosamine (UDP-GlcNAc). The C-terminal domain catalyzes the transfer of acetyl group from acetyl coenzyme A to glucosamine-1-phosphate (GlcN-1-P) to produce N-acetylglucosamine-1-phosphate (GlcNAc-1-P), which is converted into UDP-GlcNAc by the transfer of uridine 5-monophosphate (from uridine 5-triphosphate), a reaction catalyzed by the N-terminal domain. In Exiguobacterium sibiricum (strain DSM 17290 / CCUG 55495 / CIP 109462 / JCM 13490 / 255-15), this protein is Bifunctional protein GlmU.